Reading from the N-terminus, the 418-residue chain is Type II methyltransferase M.MspI (418 aa).

The SAM-dependent MTase C5-type domain occupies 105–404; sequence FKFIDLFSGI…EQISLALKTV (300 aa). Cys174 is an active-site residue.

It belongs to the class I-like SAM-binding methyltransferase superfamily. C5-methyltransferase family.

It catalyses the reaction a 2'-deoxycytidine in DNA + S-adenosyl-L-methionine = a 5-methyl-2'-deoxycytidine in DNA + S-adenosyl-L-homocysteine + H(+). In terms of biological role, a methylase, recognizes the double-stranded sequence 5'-CCGG-3', methylates C-1 on both strands, and protects the DNA from cleavage by the MspI endonuclease. This chain is Type II methyltransferase M.MspI (mspIM), found in Moraxella sp.